The following is a 541-amino-acid chain: Membrane protein insertase YidC (541 aa).

The next 6 membrane-spanning stretches (helical) occupy residues Asn-6 to Asp-26, Leu-325 to Phe-345, Phe-349 to Phe-369, Gly-420 to Leu-440, Leu-457 to Met-477, and Val-500 to Gly-520.

Belongs to the OXA1/ALB3/YidC family. Type 1 subfamily. As to quaternary structure, interacts with the Sec translocase complex via SecD. Specifically interacts with transmembrane segments of nascent integral membrane proteins during membrane integration.

The protein resides in the cell inner membrane. Functionally, required for the insertion and/or proper folding and/or complex formation of integral membrane proteins into the membrane. Involved in integration of membrane proteins that insert both dependently and independently of the Sec translocase complex, as well as at least some lipoproteins. Aids folding of multispanning membrane proteins. This is Membrane protein insertase YidC from Shewanella baltica (strain OS195).